The chain runs to 240 residues: 4-hydroxy-tetrahydrodipicolinate reductase (240 aa).

Residues 79–81 and 103–106 contribute to the NAD(+) site; these read ATT and SANM. The active-site Proton donor/acceptor is histidine 135. Histidine 136 contributes to the (S)-2,3,4,5-tetrahydrodipicolinate binding site. Catalysis depends on lysine 139, which acts as the Proton donor. Residue 145–146 coordinates (S)-2,3,4,5-tetrahydrodipicolinate; sequence GT.

It belongs to the DapB family.

The protein resides in the cytoplasm. It carries out the reaction (S)-2,3,4,5-tetrahydrodipicolinate + NAD(+) + H2O = (2S,4S)-4-hydroxy-2,3,4,5-tetrahydrodipicolinate + NADH + H(+). The enzyme catalyses (S)-2,3,4,5-tetrahydrodipicolinate + NADP(+) + H2O = (2S,4S)-4-hydroxy-2,3,4,5-tetrahydrodipicolinate + NADPH + H(+). It participates in amino-acid biosynthesis; L-lysine biosynthesis via DAP pathway; (S)-tetrahydrodipicolinate from L-aspartate: step 4/4. Catalyzes the conversion of 4-hydroxy-tetrahydrodipicolinate (HTPA) to tetrahydrodipicolinate. The chain is 4-hydroxy-tetrahydrodipicolinate reductase from Staphylococcus aureus (strain Mu3 / ATCC 700698).